The primary structure comprises 393 residues: Riboflavin biosynthesis protein RibBA (393 aa).

Residues 1–200 form a DHBP synthase region; the sequence is MQFDNIDSAL…IDDLIEYRKK (200 aa). D-ribulose 5-phosphate is bound by residues 27–28, D32, 139–143, and E163; these read RE and RNGHT. E28 is a binding site for Mg(2+). Position 142 (H142) interacts with Mg(2+). Residues 201–393 are GTP cyclohydrolase II; it reads LEPEIEFKAK…TKKIKMGHLI (193 aa). 249-253 contributes to the GTP binding site; sequence RLHSA. Positions 254, 265, and 267 each coordinate Zn(2+). GTP-binding positions include Q270, 291–293, and T313; that span reads EGR. D325 serves as the catalytic Proton acceptor; for GTP cyclohydrolase activity. The active-site Nucleophile; for GTP cyclohydrolase activity is the R327. GTP-binding residues include S348 and K353.

This sequence in the N-terminal section; belongs to the DHBP synthase family. It in the C-terminal section; belongs to the GTP cyclohydrolase II family. Mg(2+) serves as cofactor. It depends on Mn(2+) as a cofactor. The cofactor is Zn(2+).

It carries out the reaction D-ribulose 5-phosphate = (2S)-2-hydroxy-3-oxobutyl phosphate + formate + H(+). The catalysed reaction is GTP + 4 H2O = 2,5-diamino-6-hydroxy-4-(5-phosphoribosylamino)-pyrimidine + formate + 2 phosphate + 3 H(+). It participates in cofactor biosynthesis; riboflavin biosynthesis; 2-hydroxy-3-oxobutyl phosphate from D-ribulose 5-phosphate: step 1/1. Its pathway is cofactor biosynthesis; riboflavin biosynthesis; 5-amino-6-(D-ribitylamino)uracil from GTP: step 1/4. Catalyzes the conversion of D-ribulose 5-phosphate to formate and 3,4-dihydroxy-2-butanone 4-phosphate. Functionally, catalyzes the conversion of GTP to 2,5-diamino-6-ribosylamino-4(3H)-pyrimidinone 5'-phosphate (DARP), formate and pyrophosphate. The sequence is that of Riboflavin biosynthesis protein RibBA from Staphylococcus aureus (strain COL).